The primary structure comprises 144 residues: Large ribosomal subunit protein uL13 (144 aa).

This sequence belongs to the universal ribosomal protein uL13 family. In terms of assembly, part of the 50S ribosomal subunit.

Functionally, this protein is one of the early assembly proteins of the 50S ribosomal subunit, although it is not seen to bind rRNA by itself. It is important during the early stages of 50S assembly. The chain is Large ribosomal subunit protein uL13 from Nitrosomonas eutropha (strain DSM 101675 / C91 / Nm57).